The chain runs to 305 residues: tRNA pseudouridine synthase B (305 aa).

The active-site Nucleophile is Asp-38.

This sequence belongs to the pseudouridine synthase TruB family. Type 1 subfamily.

The enzyme catalyses uridine(55) in tRNA = pseudouridine(55) in tRNA. Functionally, responsible for synthesis of pseudouridine from uracil-55 in the psi GC loop of transfer RNAs. The polypeptide is tRNA pseudouridine synthase B (Latilactobacillus sakei subsp. sakei (strain 23K) (Lactobacillus sakei subsp. sakei)).